Here is a 542-residue protein sequence, read N- to C-terminus: Quinidine resistance protein 2 (542 aa).

Residues 1–67 (MAGATSSIIR…SFKTVLIAQC (67 aa)) are Cytoplasmic-facing. A Phosphoserine modification is found at S21. T38 is modified (phosphothreonine). S40 is subject to Phosphoserine. Residues 68–88 (AFTGFFSTIAGAIYYPVLSVI) traverse the membrane as a helical segment. Over 89-100 (ERKFDIDEELVN) the chain is Extracellular. The chain crosses the membrane as a helical span at residues 101-121 (VTVVVYFVFQGLAPTFMGGFA). At 122–127 (DSLGRR) the chain is on the cytoplasmic side. A helical transmembrane segment spans residues 128-148 (PVVLVAIVIYFGACIGLACAQ). A topological domain (extracellular) is located at residue T149. A helical membrane pass occupies residues 150 to 170 (YAQIIVLRCLQAAGISPVIAI). Residues 171–187 (NSGIMGDVTTRAERGGY) lie on the Cytoplasmic side of the membrane. The helical transmembrane segment at 188 to 208 (VGYVAGFQVLGSAFGALIGAG) threads the bilayer. The Extracellular portion of the chain corresponds to 209–216 (LSSRWGWR). Residues 217–237 (AIFWFLAIGSGICFLASFLIL) form a helical membrane-spanning segment. The Cytoplasmic segment spans residues 238–300 (PETKRNISGN…APFKILKAYE (63 aa)). The chain crosses the membrane as a helical span at residues 301–321 (ICILMLVAGLQFAMYTTHLTA). Topologically, residues 322–333 (LSTALSKQYHLT) are extracellular. Residues 334–354 (VAKVGLCYLPSGICTLCSIVI) traverse the membrane as a helical segment. Topologically, residues 355 to 413 (AGRYLNWNYRRRLKYYQNWLGKKRSKLLEEHDNDLNLVQRIIENDPKYTFNIFKARLQP) are cytoplasmic. A helical membrane pass occupies residues 414 to 434 (AFVTLLLSSSGFCAYGWCITV). Residues 435 to 437 (KAP) lie on the Extracellular side of the membrane. The helical transmembrane segment at 438-458 (LAAVLCMSGFASLFSNCILTF) threads the bilayer. The Cytoplasmic portion of the chain corresponds to 459–472 (STTLIVDLFPTKTS). Residues 473–493 (TATGCLNLFRCILSAVFIAAL) form a helical membrane-spanning segment. Residues 494–503 (SKMVEKMKFG) are Extracellular-facing. The chain crosses the membrane as a helical span at residues 504–524 (GVFTFLGALTSSSSILLFILL). The Cytoplasmic segment spans residues 525-542 (RKGKELAFKRKKQELGVN).

Belongs to the major facilitator superfamily. CAR1 family.

The protein localises to the cell membrane. In terms of biological role, multidrug resistance transporter involved in resistance and adaptation to quinidine and to the herbicide barban (4-chloro-2-butynyl [3-chlorophenyl] carbamate). Implicated in potassium uptake. The sequence is that of Quinidine resistance protein 2 (QDR2) from Saccharomyces cerevisiae (strain ATCC 204508 / S288c) (Baker's yeast).